Reading from the N-terminus, the 91-residue chain is Small ribosomal subunit protein uS7 (91 aa).

It belongs to the universal ribosomal protein uS7 family. As to quaternary structure, part of the 30S ribosomal subunit. Contacts proteins S9 and S11.

Its function is as follows. One of the primary rRNA binding proteins, it binds directly to 16S rRNA where it nucleates assembly of the head domain of the 30S subunit. Is located at the subunit interface close to the decoding center, probably blocks exit of the E-site tRNA. This chain is Small ribosomal subunit protein uS7 (rpsG), found in Apple proliferation phytoplasma.